The primary structure comprises 51 residues: Large ribosomal subunit protein eL39 (51 aa).

It belongs to the eukaryotic ribosomal protein eL39 family.

The sequence is that of Large ribosomal subunit protein eL39 (rpl39e) from Methanothermobacter thermautotrophicus (strain ATCC 29096 / DSM 1053 / JCM 10044 / NBRC 100330 / Delta H) (Methanobacterium thermoautotrophicum).